Reading from the N-terminus, the 790-residue chain is LMBR1 domain-containing protein 2 homolog B (790 aa).

Residues 1-21 are compositionally biased toward low complexity; sequence MSSNTTTPTPTSTPTPTSSPS. A disordered region spans residues 1-22; sequence MSSNTTTPTPTSTPTPTSSPSI. Transmembrane regions (helical) follow at residues 34-54, 66-86, 128-148, 167-187, and 195-215; these read FGNL…VLIG, IYAT…AYLV, FLYF…QSFS, VILY…ILSV, and FLSF…TITM. Residues 236–266 are a coiled coil; that stretch reads LRNYRVEAVVLKTELEDVKRQLIDHLKLIKT. Transmembrane regions (helical) follow at residues 401 to 421, 442 to 462, and 539 to 559; these read FIIA…SEIV, PGIG…VCSY, and FTLF…FNLH. Disordered regions lie at residues 630-665, 701-751, and 765-790; these read SQLD…PKLS, LGEK…TKDK, and SFQD…KNKK. Positions 644 to 665 are enriched in polar residues; the sequence is IDSSNRYKPTPTKTSINIPKLS. Over residues 706-734 the composition is skewed to low complexity; that stretch reads NASNNNNNNNNNNNNNNSNNKNSNNNNNS. A compositionally biased stretch (polar residues) spans 735–746; that stretch reads ILTSNYESYSTP. Residues 766–778 are compositionally biased toward acidic residues; the sequence is FQDDDDHTFDDIE.

This sequence belongs to the LIMR family.

Its subcellular location is the membrane. This chain is LMBR1 domain-containing protein 2 homolog B, found in Dictyostelium discoideum (Social amoeba).